Reading from the N-terminus, the 420-residue chain is Transmembrane protease serine 11B-like protein (420 aa).

Over 1-19 (MTVSKLRPVIASRKSFPPW) the chain is Cytoplasmic. Residues 20-40 (MIILGVLGVLAILGLIIGLLV) form a helical; Signal-anchor for type II membrane protein membrane-spanning segment. Over 41–420 (HFLAVENKIY…RDWIASKTGI (380 aa)) the chain is Extracellular. In terms of domain architecture, SEA spans 48-165 (KIYYYQGSFK…GSLKLTEITK (118 aa)). N111 and N146 each carry an N-linked (GlcNAc...) asparagine glycan. The Peptidase S1 domain maps to 189–419 (ITGGSTAQKG…YRDWIASKTG (231 aa)). Residues C214 and C230 are joined by a disulfide bond. Residue H229 is the Charge relay system of the active site. A glycan (N-linked (GlcNAc...) asparagine) is linked at N239. The active-site Charge relay system is the D274. Intrachain disulfides connect C339/C355 and C366/C395. The active-site Charge relay system is S370.

The protein belongs to the peptidase S1 family.

It localises to the membrane. The protein localises to the cell membrane. With respect to regulation, inhibited by aprotinin, leupeptin, benzamidine, SERPINA1, SPINT1 and SPINT2. Serine protease. The chain is Transmembrane protease serine 11B-like protein (Tmprss11bnl) from Rattus norvegicus (Rat).